The sequence spans 156 residues: rRNA methyltransferase (156 aa).

Its function is as follows. Modifies 16S rRNA so making ribosomes resistant to certain aminoglycosides. The protein is rRNA methyltransferase (kamC) of Saccharopolyspora hirsuta.